A 1657-amino-acid chain; its full sequence is A disintegrin and metalloproteinase with thrombospondin motifs 7 (1657 aa).

The N-terminal stretch at 1–20 (MHRGPSLLLILCALASRVLG) is a signal peptide. A propeptide spanning residues 21–220 (PASGLVTEGR…QQQQKRRQQR (200 aa)) is cleaved from the precursor. Asn84 carries N-linked (GlcNAc...) asparagine glycosylation. The interval 165-221 (PGHAQPHVVYKHQGSRKQAQQGDSRPSGTCGMQVPPDLEQQREHWEQQQQKRRQQRS) is disordered. The span at 180–191 (RKQAQQGDSRPS) shows a compositional bias: polar residues. The Cysteine switch motif lies at 192–199 (GTCGMQVP). A Zn(2+)-binding site is contributed by Cys194. A Peptidase M12B domain is found at 226–437 (KWVETLVVAD…GWGLCLDDRP (212 aa)). Cystine bridges form between Cys302/Cys356, Cys331/Cys338, Cys350/Cys432, Cys389/Cys416, Cys459/Cys482, Cys470/Cys488, Cys477/Cys507, Cys501/Cys512, Cys535/Cys572, Cys539/Cys577, and Cys550/Cys562. His372 is a binding site for Zn(2+). The active site involves Glu373. Zn(2+) is bound by residues His376 and His382. The Disintegrin domain occupies 447-522 (VLPGVLYDVN…VPEGFQPEAV (76 aa)). In terms of domain architecture, TSP type-1 1 spans 523–578 (DGGWSGWSAWSDCSRSCGVGVRSSERQCTQPVPKNRGKYCVGERKRSQLCNLPACP). Residue Asn622 is glycosylated (N-linked (GlcNAc...) asparagine). Residues 683–794 (QTVSRTFKET…PGVHYQYTIQ (112 aa)) form a spacer region. TSP type-1 domains lie at 804–863 (PEFS…EPCP), 864–923 (PRWW…NRHV), and 925–978 (CPST…QPCQ). Disordered regions lie at residues 1009–1034 (LAPR…EELD), 1073–1127 (GGWT…GLEQ), 1140–1237 (EDTP…DVVE), 1283–1304 (GRDS…SSQH), and 1317–1384 (TVPT…ARNA). A compositionally biased stretch (pro residues) spans 1211-1224 (PQSPIPTQPSPPSI). Polar residues-rich tracts occupy residues 1293-1304 (PTFSSPELSSQH) and 1327-1342 (PSGQ…TQSP). TSP type-1 domains follow at residues 1366-1414 (QPSL…SGND), 1417-1477 (CTLA…CQPG), 1479-1522 (TKPP…PEPG), and 1524-1584 (CEES…LCSH). Residues 1587–1627 (WPESSRPCATEDCELVEPPRCERDRLSFNFCETLRLLGRCQ) enclose the PLAC domain.

Interacts with COMP. Requires Zn(2+) as cofactor. Post-translationally, N-glycosylated. Can be O-fucosylated by POFUT2 on a serine or a threonine residue found within the consensus sequence C1-X(2)-(S/T)-C2-G of the TSP type-1 repeat domains where C1 and C2 are the first and second cysteine residue of the repeat, respectively. Fucosylated repeats can then be further glycosylated by the addition of a beta-1,3-glucose residue by the glucosyltransferase, B3GALTL. Fucosylation mediates the efficient secretion of ADAMTS family members. Can also be C-glycosylated with one or two mannose molecules on tryptophan residues within the consensus sequence W-X-X-W of the TPRs. N- and C-glycosylations can also facilitate secretion. In terms of processing, O-glycosylated proteoglycan; contains chondroitin sulfate. May be cleaved by a furin endopeptidase. The precursor is sequentially processed.

It is found in the secreted. Its subcellular location is the extracellular space. The protein resides in the extracellular matrix. Metalloprotease. Was previously shown to degrade COMP. However, a later study found no activity against COMP. The chain is A disintegrin and metalloproteinase with thrombospondin motifs 7 (Adamts7) from Mus musculus (Mouse).